The following is a 295-amino-acid chain: MAVNSLSVMSPDGGLSRYLTEIRKFPMLSKDEEFMLAQRWKEHQDPQAAHKMVTSHLRLVAKIAMGYRGYGLPIGEVISEGNVGLMQAVKKFEPEKGFRLATYAMWWIRASIQEYILRSWSLVKMGTTAAQKKLFFNLRKAKSQIAAFQEGDLHPDQVSQIATKLGVLDSEVISMNRRLSGPDASLNAPLRADGESEWQDWLADEEQVSQETRVAEDEEKSLRMSLLEEAMVELTDRERHILTERRLKDDPTTLEELAAQYGVSRERVRQIEVRAFEKLQKTMREAAIAKNMVDA.

Residues 52 to 121 are sigma-70 factor domain-2; that stretch reads MVTSHLRLVA…IQEYILRSWS (70 aa). The short motif at 76–79 is the Interaction with polymerase core subunit RpoC element; sequence EVIS. The sigma-70 factor domain-4 stretch occupies residues 230–281; it reads AMVELTDRERHILTERRLKDDPTTLEELAAQYGVSRERVRQIEVRAFEKLQK. The segment at residues 254-273 is a DNA-binding region (H-T-H motif); sequence LEELAAQYGVSRERVRQIEV.

It belongs to the sigma-70 factor family. RpoH subfamily. In terms of assembly, interacts with the RNA polymerase core enzyme.

It is found in the cytoplasm. Sigma factors are initiation factors that promote the attachment of RNA polymerase to specific initiation sites and are then released. This sigma factor is involved in regulation of expression of heat shock genes. This is RNA polymerase sigma factor RpoH from Caulobacter vibrioides (strain ATCC 19089 / CIP 103742 / CB 15) (Caulobacter crescentus).